A 527-amino-acid polypeptide reads, in one-letter code: tRNA pseudouridine synthase Pus10 (527 aa).

Positions 21 and 24 each coordinate Zn(2+). The stretch at 42 to 87 forms a coiled coil; it reads KELLNELQKFLEPEKPELILEAPNPPLKKIRLHEDGIDNLSEDGKE. S82 carries the phosphoserine modification. Zn(2+) is bound by residues C107 and C110. The tract at residues 302 to 315 is RNA binding forefinger loop; the sequence is TPWIIDGERKMESS. D342 (nucleophile) is an active-site residue. Positions 440–455 are RNA binding thumb loop; that stretch reads QKTPLRVLHRRPLAVR.

The protein belongs to the pseudouridine synthase Pus10 family. In terms of assembly, interacts with components of the microprocessor complex DROSHA and DGCR8. In terms of processing, proteolytically cleaved during TRAIL-induced cell death. Cleaved, in vitro, either by caspase-3 (CASP3) or caspase-8 (CASP8).

Its subcellular location is the nucleus. It is found in the cytoplasm. The protein resides in the mitochondrion. The catalysed reaction is uridine(55) in tRNA = pseudouridine(55) in tRNA. It catalyses the reaction uridine(54) in tRNA = pseudouridine(54) in tRNA. Protein with different functions depending on its subcellular location: involved in miRNA processing in the nucleus and acts as a tRNA pseudouridylate synthase in the cytoplasm. In the cytoplasm, acts as a pseudouridylate synthase by catalyzing synthesis of pseudouridine(54) and pseudouridine(55) from uracil-54 and uracil-55, respectively, in the psi GC loop of a subset of tRNAs. tRNA pseudouridylate synthase activity is enhanced by the presence of 1-methyladenosine at position 53-61 of tRNAs. Does not show tRNA pseudouridylate synthase activity in the nucleus. In the nucleus, promotes primary microRNAs (pri-miRNAs) processing independently of its RNA pseudouridylate synthase activity. Binds pri-miRNAs. Modulator of TRAIL/TNFSF10-induced cell death via activation of procaspase-8 and BID cleavage. Required for the progression of the apoptotic signal through intrinsic mitochondrial cell death. The sequence is that of tRNA pseudouridine synthase Pus10 from Mus musculus (Mouse).